We begin with the raw amino-acid sequence, 59 residues long: uncharacterized protein (59 aa).

The signal sequence occupies residues 1-21 (MYLFYVLLSSLFLSALIYVIG). The Extracellular segment spans residues 22–24 (KSH). Residues 25–45 (PNLFMFISLFVNVVTILYLVF) form a helical membrane-spanning segment. The Cytoplasmic segment spans residues 46-59 (KDYGQYIIAKPINT).

It is found in the host membrane. This is an uncharacterized protein from Acidianus convivator (ABV).